Here is a 118-residue protein sequence, read N- to C-terminus: UPF0102 protein CHY_1414 (118 aa).

This sequence belongs to the UPF0102 family.

The polypeptide is UPF0102 protein CHY_1414 (Carboxydothermus hydrogenoformans (strain ATCC BAA-161 / DSM 6008 / Z-2901)).